Here is a 293-residue protein sequence, read N- to C-terminus: ATP synthase gamma chain (293 aa).

This sequence belongs to the ATPase gamma chain family. In terms of assembly, F-type ATPases have 2 components, CF(1) - the catalytic core - and CF(0) - the membrane proton channel. CF(1) has five subunits: alpha(3), beta(3), gamma(1), delta(1), epsilon(1). CF(0) has three main subunits: a, b and c.

Its subcellular location is the cell inner membrane. Its function is as follows. Produces ATP from ADP in the presence of a proton gradient across the membrane. The gamma chain is believed to be important in regulating ATPase activity and the flow of protons through the CF(0) complex. The sequence is that of ATP synthase gamma chain from Leptothrix cholodnii (strain ATCC 51168 / LMG 8142 / SP-6) (Leptothrix discophora (strain SP-6)).